We begin with the raw amino-acid sequence, 165 residues long: Ribosome maturation factor RimM (165 aa).

Residues 92-163 (EARHYWADLE…RVVVDPPEGL (72 aa)) enclose the PRC barrel domain.

Belongs to the RimM family. Binds ribosomal protein uS19.

The protein resides in the cytoplasm. In terms of biological role, an accessory protein needed during the final step in the assembly of 30S ribosomal subunit, possibly for assembly of the head region. Essential for efficient processing of 16S rRNA. May be needed both before and after RbfA during the maturation of 16S rRNA. It has affinity for free ribosomal 30S subunits but not for 70S ribosomes. This Anaeromyxobacter sp. (strain Fw109-5) protein is Ribosome maturation factor RimM.